The following is a 551-amino-acid chain: TRAF3-interacting JNK-activating modulator (551 aa).

Topologically, residues 1-526 (MISPDPRPSP…QLPPRRQCGR (526 aa)) are cytoplasmic. Disordered stretches follow at residues 73-95 (LEEK…RPGQ) and 140-178 (DHLS…IKND). Coiled-coil stretches lie at residues 240–436 (DKLK…LLTK) and 464–506 (WDLR…RKLQ). A helical; Anchor for type IV membrane protein membrane pass occupies residues 527-544 (WLPVLMVVIAAALAVFLA). Residues 545–551 (NKDNLMI) are Extracellular-facing.

As to quaternary structure, interacts (via its coiled-coil domain) with TRAF3 (via isoleucine zipper). Interacts with MAP2K1. Interacts with PPP2CA; this interaction targets PPP2CA to the lysosomes. Interacts with TLR4. Interacts with MAVS. Interacts with TBK1.

The protein resides in the cell membrane. Its subcellular location is the golgi apparatus membrane. The protein localises to the lysosome membrane. It is found in the mitochondrion outer membrane. Adapter protein that plays essential roles in both innate and adaptive immunity. Plays a crucial role in the regulation of thymocyte development. Mechanistically, mediates TCR-stimulated activation through recruiting MAP2K1/MEK1 to the Golgi and, thereby, facilitating the interaction of MAP2K1/MEK1 with its activator BRAF. Also plays an essential role in regulatory T-cell stability and function by recruiting the serine-threonine phosphatase catalytic subunit (PPP2CA) to the lysosome, thereby facilitating the interaction of PP2Ac with the mTORC1 component RPTOR and restricting glycolytic metabolism. Positively regulates TLR4 signaling activity in macrophage-mediated inflammation by acting as a molecular clamp to facilitate LPS-induced translocation of TLR4 to lipid rafts. In response to viral infection, facilitates the recruitment of TRAF3 to MAVS within mitochondria leading to IRF3 activation and interferon production. However, participates in the maintenance of immune homeostasis and the prevention of overzealous innate immunity by promoting 'Lys-48'-dependent ubiquitination of TBK1. The protein is TRAF3-interacting JNK-activating modulator (TRAF3IP3) of Homo sapiens (Human).